Consider the following 260-residue polypeptide: 5'-nucleotidase SurE (260 aa).

The a divalent metal cation site is built by Asp-13, Asp-14, Ser-44, and Asn-102.

It belongs to the SurE nucleotidase family. The cofactor is a divalent metal cation.

It is found in the cytoplasm. It carries out the reaction a ribonucleoside 5'-phosphate + H2O = a ribonucleoside + phosphate. Functionally, nucleotidase that shows phosphatase activity on nucleoside 5'-monophosphates. The polypeptide is 5'-nucleotidase SurE (Christiangramia forsetii (strain DSM 17595 / CGMCC 1.15422 / KT0803) (Gramella forsetii)).